Here is a 1076-residue protein sequence, read N- to C-terminus: Structural maintenance of chromosomes protein 5 (1076 aa).

49–56 (GHNGSGKS) lines the ATP pocket. Residues 190 to 415 (STSIEDKCTT…KRDEEQNSQL (226 aa)) adopt a coiled-coil conformation. Positions 375 to 410 (EQKYSTAERDSRQEEDAIQKKSYEMRQLENKKRDEE) are enriched in basic and acidic residues. Positions 375–420 (EQKYSTAERDSRQEEDAIQKKSYEMRQLENKKRDEEQNSQLNRQDR) are disordered. The segment at 416-617 (NRQDRYRVLQ…ANTWRDQFFK (202 aa)) is flexible hinge. Coiled coils occupy residues 627-713 (NSIL…EKKA) and 749-786 (KSRVNKSNSEAETHRSKLEDLKSVKDAAEDLLKTALNH).

Belongs to the SMC family. SMC5 subfamily. As to quaternary structure, interacts with smc-6. In terms of tissue distribution, expressed in the germline (at protein level).

Its subcellular location is the nucleus. It localises to the chromosome. In terms of biological role, core component of the smc-5/smc-6 complex. Functions in DNA double strand break repair by promoting sister-chromatid homologous recombination during meiosis. Acts in a DNA repair pathway for removal of ionizing radiation- and ultraviolet (UV) radiation-induced DNA lesions that is distinct from classical nucleotide excision repair and the translesion synthesis pathway. Also involved in the recovery of stalled replication forks. In Caenorhabditis elegans, this protein is Structural maintenance of chromosomes protein 5.